Here is a 972-residue protein sequence, read N- to C-terminus: mRNA transport regulator MTR10 (972 aa).

It is found in the nucleus. Functionally, involved in mRNA transport from nucleus to cytoplasm. This chain is mRNA transport regulator MTR10 (MTR10), found in Saccharomyces cerevisiae (strain ATCC 204508 / S288c) (Baker's yeast).